A 451-amino-acid polypeptide reads, in one-letter code: Cindoxin reductase (451 aa).

Residues alanine 24, glutamate 45, leucine 53, and valine 89 each coordinate FAD. Residues 157 to 160 and 197 to 198 contribute to the NADP(+) site; these read NGNV and RS. Residues tryptophan 338 and 345-347 contribute to the FAD site; that span reads GGI. Position 345 (glycine 345) interacts with NADP(+).

The protein belongs to the ferredoxin--NADP reductase type 1 family. Requires FAD as cofactor.

Involved in the degradation of cineol (eucalyptol). Catalyzes the reduction of cindoxin (CinC). This Citrobacter braakii protein is Cindoxin reductase (cinB).